The following is a 237-amino-acid chain: Eukaryotic translation initiation factor 4E-1 (237 aa).

Residues 1-61 (MVVEDTQKSV…KPPAALARNP (61 aa)) form a disordered region. Over residues 25 to 44 (NNDDDDDDLEEGEIPVDGED) the composition is skewed to acidic residues. Low complexity predominate over residues 47 to 58 (ATATTKPPAALA). 2 EIF4G-binding regions span residues 62–65 (HPLE) and 72–108 (FDNP…NNIH). Residues 80–85 (KQAAWG), K112, and 130–131 (WE) each bind mRNA. The cysteines at positions 135 and 173 are disulfide-linked. Residues 156–165 (YTLLAMIGEQ) form an EIF4G-binding region. Residues 180–185 (RSRQDK) and 225–229 (KKLDR) each bind mRNA.

It belongs to the eukaryotic initiation factor 4E family. In terms of assembly, EIF4F is a multi-subunit complex, the composition of which varies with external and internal environmental conditions. It is composed of at least EIF4A, EIF4E and EIF4G. EIF4E is also known to interact with other partners. In higher plants two isoforms of EIF4F have been identified, named isoform EIF4F and isoform EIF(iso)4F. Isoform EIF4F has subunits p220 and p26, whereas isoform EIF(iso)4F has subunits p82 and p28. As to quaternary structure, (Microbial infection) Interacts with potyvirus viral genome-linked protein (VPg) in the nucleus; this interaction is possible in susceptible hosts but is impaired in resistant plants. Binds to soybean mosaic virus (SMV) VPg in the nucleus. Interacts with SMV nuclear inclusion protein A (NIa-Pro) and nuclear inclusion protein B (NIb) in the cytoplasm. Post-translationally, according to the redox status, the Cys-135-Cys-173 disulfide bridge may have a role in regulating protein function by affecting its ability to bind capped mRNA. As to expression, mostly expressed in roots, flowers, immature pods and mature seeds, and, to a lower extent, in stems and leaves.

It is found in the nucleus. It localises to the cytoplasm. In terms of biological role, component of the protein complex eIF4F, which is involved in the recognition of the mRNA cap, ATP-dependent unwinding of 5'-terminal secondary structure and recruitment of mRNA to the ribosome. Recognizes and binds the 7-methylguanosine-containing mRNA cap during an early step in the initiation of protein synthesis and facilitates ribosome binding by inducing the unwinding of the mRNAs secondary structures. Key component of recessive resistance to potyviruses (e.g. soybean mosaic virus (SMV), bean common mosaic virus (BCMV) and watermelon mosaic virus (WMV), but not bean pod mottle virus (BPMV)). Functionally, (Microbial infection) Susceptibility host factor required for viral infection by recruiting viral RNAs to the host ribosomal complex via an interaction with viral genome-linked protein (VPg). This chain is Eukaryotic translation initiation factor 4E-1, found in Glycine max (Soybean).